We begin with the raw amino-acid sequence, 729 residues long: Fatty acid oxidation complex subunit alpha (729 aa).

The segment at 1 to 189 (MLYQGETLQL…KVGLVDAVVA (189 aa)) is enoyl-CoA hydratase/isomerase. Asp-296 contacts substrate. A 3-hydroxyacyl-CoA dehydrogenase region spans residues 311–729 (EAPKQAAVLG…LSDVSTGQPA (419 aa)). NAD(+) is bound by residues Met-324, Asp-343, 400–402 (VVE), Lys-407, and Ser-429. His-450 (for 3-hydroxyacyl-CoA dehydrogenase activity) is an active-site residue. Residue Asn-453 participates in NAD(+) binding. Positions 500 and 660 each coordinate substrate.

This sequence in the N-terminal section; belongs to the enoyl-CoA hydratase/isomerase family. In the C-terminal section; belongs to the 3-hydroxyacyl-CoA dehydrogenase family. As to quaternary structure, heterotetramer of two alpha chains (FadB) and two beta chains (FadA).

The catalysed reaction is a (3S)-3-hydroxyacyl-CoA + NAD(+) = a 3-oxoacyl-CoA + NADH + H(+). The enzyme catalyses a (3S)-3-hydroxyacyl-CoA = a (2E)-enoyl-CoA + H2O. It catalyses the reaction a 4-saturated-(3S)-3-hydroxyacyl-CoA = a (3E)-enoyl-CoA + H2O. It carries out the reaction (3S)-3-hydroxybutanoyl-CoA = (3R)-3-hydroxybutanoyl-CoA. The catalysed reaction is a (3Z)-enoyl-CoA = a 4-saturated (2E)-enoyl-CoA. The enzyme catalyses a (3E)-enoyl-CoA = a 4-saturated (2E)-enoyl-CoA. It functions in the pathway lipid metabolism; fatty acid beta-oxidation. Involved in the aerobic and anaerobic degradation of long-chain fatty acids via beta-oxidation cycle. Catalyzes the formation of 3-oxoacyl-CoA from enoyl-CoA via L-3-hydroxyacyl-CoA. It can also use D-3-hydroxyacyl-CoA and cis-3-enoyl-CoA as substrate. The sequence is that of Fatty acid oxidation complex subunit alpha from Serratia proteamaculans (strain 568).